The sequence spans 399 residues: Probable protein phosphatase 2C 28 (399 aa).

The PPM-type phosphatase domain maps to Glu48–Leu356. Mn(2+) is bound by residues Asp87, Gly88, Asp288, and Asp347.

This sequence belongs to the PP2C family. The cofactor is Mg(2+). It depends on Mn(2+) as a cofactor.

It carries out the reaction O-phospho-L-seryl-[protein] + H2O = L-seryl-[protein] + phosphate. The catalysed reaction is O-phospho-L-threonyl-[protein] + H2O = L-threonyl-[protein] + phosphate. This is Probable protein phosphatase 2C 28 from Oryza sativa subsp. japonica (Rice).